The chain runs to 286 residues: General stress protein 39 (286 aa).

The segment at 1-26 is disordered; sequence MANYPKELPAQTQSRQPGIESEMNPS. 46–70 is a binding site for NAD(+); it reads LITGGDSGIGRAVSVAYAKEGADIA. Serine 178 provides a ligand contact to substrate. Catalysis depends on tyrosine 191, which acts as the Proton acceptor.

The protein belongs to the short-chain dehydrogenases/reductases (SDR) family.

In Bacillus subtilis (strain 168), this protein is General stress protein 39 (ydaD).